The sequence spans 498 residues: L-proline--[L-prolyl-carrier protein] ligase (498 aa).

This sequence belongs to the ATP-dependent AMP-binding enzyme family.

The catalysed reaction is holo-[peptidyl-carrier protein] + L-proline + ATP = L-prolyl-[peptidyl-carrier protein] + AMP + diphosphate. Involved in the biosynthesis of pyoluteorin. Catalyzes the conversion of L-proline to L-prolyl-AMP and the transfer of the L-prolyl group to acyl carrier protein PltL. The chain is L-proline--[L-prolyl-carrier protein] ligase from Pseudomonas fluorescens (strain ATCC BAA-477 / NRRL B-23932 / Pf-5).